The sequence spans 620 residues: Protein translocase subunit SecD (620 aa).

6 helical membrane passes run 10–30, 464–484, 488–507, 511–533, 555–575, and 582–602; these read YLLI…NLYP, LWGM…FGVI, ALAF…GATL, GIAG…FSRI, FTAI…LYAM, and GFAV…IMVT.

The protein belongs to the SecD/SecF family. SecD subfamily. As to quaternary structure, forms a complex with SecF. Part of the essential Sec protein translocation apparatus which comprises SecA, SecYEG and auxiliary proteins SecDF-YajC and YidC.

The protein resides in the cell inner membrane. Functionally, part of the Sec protein translocase complex. Interacts with the SecYEG preprotein conducting channel. SecDF uses the proton motive force (PMF) to complete protein translocation after the ATP-dependent function of SecA. In Pseudomonas aeruginosa (strain ATCC 15692 / DSM 22644 / CIP 104116 / JCM 14847 / LMG 12228 / 1C / PRS 101 / PAO1), this protein is Protein translocase subunit SecD.